Here is a 377-residue protein sequence, read N- to C-terminus: Lactosylceramide 1,3-N-acetyl-beta-D-glucosaminyltransferase (377 aa).

Over 1–14 the chain is Cytoplasmic; it reads MRVFVSSRRVKRWQ. A helical; Signal-anchor for type II membrane protein transmembrane segment spans residues 15–35; sequence FFHLFAICFILSFMVFWGPIN. At 36-377 the chain is on the lumenal side; the sequence is NYIMSHMKSY…NSYPCRAAFA (342 aa). Asparagine 58 carries N-linked (GlcNAc...) asparagine glycosylation.

This sequence belongs to the glycosyltransferase 31 family.

It is found in the golgi apparatus membrane. The enzyme catalyses a beta-D-Gal-(1-&gt;4)-beta-D-Glc-(1&lt;-&gt;1)-Cer(d18:1(4E)) + UDP-N-acetyl-alpha-D-glucosamine = a beta-D-GlcNAc-(1-&gt;3)-beta-D-Gal-(1-&gt;4)-beta-D-Glc-(1&lt;-&gt;1)-Cer(d18:1(4E)) + UDP + H(+). The catalysed reaction is a neolactoside nLc4Cer(d18:1(4E)) + UDP-N-acetyl-alpha-D-glucosamine = a neolactoside IV(3)-beta-GlcNAc-nLc4Cer(d18:1(4E)) + UDP + H(+). It functions in the pathway protein modification; protein glycosylation. In terms of biological role, beta-1,3-N-acetylglucosaminyltransferase that plays a key role in the synthesis of lacto- or neolacto-series carbohydrate chains on glycolipids, notably by participating in biosynthesis of HNK-1 and Lewis X carbohydrate structures. Has strong activity toward lactosylceramide (LacCer) and neolactotetraosylceramide (nLc(4)Cer; paragloboside), resulting in the synthesis of Lc(3)Cer and neolactopentaosylceramide (nLc(5)Cer), respectively. Probably plays a central role in regulating neolacto-series glycolipid synthesis during embryonic development. The chain is Lactosylceramide 1,3-N-acetyl-beta-D-glucosaminyltransferase from Rattus norvegicus (Rat).